Consider the following 543-residue polypeptide: uncharacterized protein (543 aa).

One can recognise a Radical SAM core domain in the interval N203 to E460. The region spanning V470–R534 is the TRAM domain.

This is an uncharacterized protein from Methanocaldococcus jannaschii (strain ATCC 43067 / DSM 2661 / JAL-1 / JCM 10045 / NBRC 100440) (Methanococcus jannaschii).